We begin with the raw amino-acid sequence, 349 residues long: tRNA pseudouridine synthase D (349 aa).

F27 provides a ligand contact to substrate. D80 acts as the Nucleophile in catalysis. N129 contributes to the substrate binding site. Residues 155-303 form the TRUD domain; it reads GVPNYFGAQR…VEAARRAMLL (149 aa). Substrate is bound at residue F329.

This sequence belongs to the pseudouridine synthase TruD family.

The enzyme catalyses uridine(13) in tRNA = pseudouridine(13) in tRNA. Responsible for synthesis of pseudouridine from uracil-13 in transfer RNAs. This chain is tRNA pseudouridine synthase D, found in Shigella sonnei (strain Ss046).